The primary structure comprises 341 residues: Mitochondrial protein C2orf69 homolog (341 aa).

Residues Met1 to Ala35 constitute a mitochondrion transit peptide.

This sequence belongs to the C2orf69 family.

The protein localises to the mitochondrion matrix. May play a role in the respiratory chain. The sequence is that of Mitochondrial protein C2orf69 homolog from Danio rerio (Zebrafish).